A 231-amino-acid chain; its full sequence is Large ribosomal subunit protein uL1 (231 aa).

This sequence belongs to the universal ribosomal protein uL1 family. Part of the 50S ribosomal subunit.

Its function is as follows. Binds directly to 23S rRNA. The L1 stalk is quite mobile in the ribosome, and is involved in E site tRNA release. In terms of biological role, protein L1 is also a translational repressor protein, it controls the translation of the L11 operon by binding to its mRNA. The sequence is that of Large ribosomal subunit protein uL1 from Chromobacterium violaceum (strain ATCC 12472 / DSM 30191 / JCM 1249 / CCUG 213 / NBRC 12614 / NCIMB 9131 / NCTC 9757 / MK).